We begin with the raw amino-acid sequence, 638 residues long: Probable beta-glucosidase C (638 aa).

Residues 1-18 form the signal peptide; sequence MKVLAPGYLAEASLTALA. Residues Asn40, Asn94, Asn116, Asn223, and Asn274 are each glycosylated (N-linked (GlcNAc...) asparagine). Residue Asp341 is part of the active site. Asn364, Asn480, Asn488, and Asn528 each carry an N-linked (GlcNAc...) asparagine glycan.

Belongs to the glycosyl hydrolase 3 family.

The protein resides in the secreted. The enzyme catalyses Hydrolysis of terminal, non-reducing beta-D-glucosyl residues with release of beta-D-glucose.. Its pathway is glycan metabolism; cellulose degradation. Beta-glucosidases are one of a number of cellulolytic enzymes involved in the degradation of cellulosic biomass. Catalyzes the last step releasing glucose from the inhibitory cellobiose. The sequence is that of Probable beta-glucosidase C (bglC) from Aspergillus oryzae (strain ATCC 42149 / RIB 40) (Yellow koji mold).